Reading from the N-terminus, the 124-residue chain is Ribonuclease pancreatic (124 aa).

Over residues 1-13 the composition is skewed to basic and acidic residues; sequence KETAAAKFERQHI. The interval 1–24 is disordered; sequence KETAAAKFERQHIDSNPSSVSSSN. Substrate is bound by residues Lys7 and Arg10. His12 acts as the Proton acceptor in catalysis. Residues 15–24 show a composition bias toward low complexity; it reads SNPSSVSSSN. 4 cysteine pairs are disulfide-bonded: Cys26/Cys84, Cys40/Cys95, Cys58/Cys110, and Cys65/Cys72. A glycan (N-linked (GlcNAc...) asparagine; partial) is linked at Asn34. Substrate is bound by residues 41–45, Lys66, and Arg85; that span reads KPVNT. Residue His119 is the Proton donor of the active site.

The protein belongs to the pancreatic ribonuclease family. Monomer. Interacts with and forms tight 1:1 complexes with RNH1. Dimerization of two such complexes may occur. Interaction with RNH1 inhibits this protein. Pancreas.

The protein resides in the secreted. The catalysed reaction is an [RNA] containing cytidine + H2O = an [RNA]-3'-cytidine-3'-phosphate + a 5'-hydroxy-ribonucleotide-3'-[RNA].. It carries out the reaction an [RNA] containing uridine + H2O = an [RNA]-3'-uridine-3'-phosphate + a 5'-hydroxy-ribonucleotide-3'-[RNA].. Functionally, endonuclease that catalyzes the cleavage of RNA on the 3' side of pyrimidine nucleotides. Acts on single-stranded and double-stranded RNA. The chain is Ribonuclease pancreatic (RNASE1) from Antilocapra americana (Pronghorn).